We begin with the raw amino-acid sequence, 434 residues long: Nicotinate phosphoribosyltransferase (434 aa).

Residue histidine 242 is modified to Phosphohistidine; by autocatalysis.

The protein belongs to the NAPRTase family. In terms of processing, transiently phosphorylated on a His residue during the reaction cycle. Phosphorylation strongly increases the affinity for substrates and increases the rate of nicotinate D-ribonucleotide production. Dephosphorylation regenerates the low-affinity form of the enzyme, leading to product release.

The enzyme catalyses nicotinate + 5-phospho-alpha-D-ribose 1-diphosphate + ATP + H2O = nicotinate beta-D-ribonucleotide + ADP + phosphate + diphosphate. Its pathway is cofactor biosynthesis; NAD(+) biosynthesis; nicotinate D-ribonucleotide from nicotinate: step 1/1. Catalyzes the synthesis of beta-nicotinate D-ribonucleotide from nicotinate and 5-phospho-D-ribose 1-phosphate at the expense of ATP. In Brucella abortus (strain S19), this protein is Nicotinate phosphoribosyltransferase.